The primary structure comprises 359 residues: Halocin-H4 (359 aa).

An N-terminal signal peptide occupies residues 1–46 (MSKDRDGRRTSRRGTLKKIGGFSLGALSFGAVGRTQAATGSSVTTA). Disordered stretches follow at residues 40–59 (GSSV…DPKS) and 340–359 (IPDR…SRKQ).

The protein resides in the secreted. In terms of biological role, has antibacterial activity against other haloarchaeons. Interacts with the membrane of the target cells where it causes permeability changes that result in an ionic imbalance leading to cell lysis and death. The sequence is that of Halocin-H4 (halH4) from Haloferax mediterranei (strain ATCC 33500 / DSM 1411 / JCM 8866 / NBRC 14739 / NCIMB 2177 / R-4) (Halobacterium mediterranei).